The following is a 397-amino-acid chain: Odorant receptor 98a (397 aa).

The Cytoplasmic portion of the chain corresponds to 1-43; that stretch reads MLFNYLRKPNPTNLLTSPDSFRYFEYGMFCMGWHTPATHKIIY. The chain crosses the membrane as a helical span at residues 44-64; the sequence is YITSCLIFAWCAVYLPIGIII. Residues 65–77 lie on the Extracellular side of the membrane; the sequence is SFKTDINTFTPNE. Residues 78–98 form a helical membrane-spanning segment; it reads LLTVMQLFFNSVGMPFKVLFF. Over 99-138 the chain is Cytoplasmic; the sequence is NLYISGFYKAKKLLSEMDKRCTTLKERVEVHQGVVRCNKA. The helical transmembrane segment at 139 to 159 threads the bilayer; that stretch reads YLIYQFIYTAYTISTFLSAAL. At 160-192 the chain is on the extracellular side; that stretch reads SGKLPWRIYNPFVDFRESRSSFWKAALNETALM. Asparagine 187 carries an N-linked (GlcNAc...) asparagine glycan. The chain crosses the membrane as a helical span at residues 193–213; sequence LFAVTQTLMSDIYPLLYGLIL. The Cytoplasmic segment spans residues 214–266; that stretch reads RVHLKLLRLRVESLCTDSGKSDAENEQDLIKCIKDHNLIIDYAAAIRPAVTRT. Residues 267 to 287 form a helical membrane-spanning segment; that stretch reads IFVQFLLIGICLGLSMINLLF. Over 288 to 293 the chain is Extracellular; that stretch reads FADIWT. A helical membrane pass occupies residues 294–314; it reads GLATVAYINGLMVQTFPFCFV. Topologically, residues 315–354 are cytoplasmic; the sequence is CDLLKKDCELLVSAIFHSNWINSSRSYKSSLRYFLKNAQK. A helical transmembrane segment spans residues 355–375; the sequence is SIAFTAGSIFPISTGSNIKVA. The Extracellular segment spans residues 376–397; that stretch reads KLAFSVVTFVNQLNIADRLTKN.

This sequence belongs to the insect chemoreceptor superfamily. Heteromeric odorant receptor channel (TC 1.A.69) family. Or2a subfamily. As to quaternary structure, interacts with Orco. Complexes exist early in the endomembrane system in olfactory sensory neurons (OSNs), coupling these complexes to the conserved ciliary trafficking pathway. In terms of tissue distribution, expressed in olfactory sensory neurons in the antenna.

It localises to the cell membrane. Odorant receptor which mediates acceptance or avoidance behavior, depending on its substrates. The odorant receptor repertoire encodes a large collection of odor stimuli that vary widely in identity, intensity, and duration. May form a complex with Orco to form odorant-sensing units, providing sensitive and prolonged odorant signaling and calcium permeability. This is Odorant receptor 98a (Or98a) from Drosophila melanogaster (Fruit fly).